Here is a 340-residue protein sequence, read N- to C-terminus: Glyceraldehyde-3-phosphate dehydrogenase (340 aa).

NAD(+) contacts are provided by residues 11–12 (SI) and Gly-111. 140-142 (SCN) contributes to the D-glyceraldehyde 3-phosphate binding site. Residue Cys-141 is the Nucleophile of the active site. Arg-169 contacts NAD(+). 195 to 196 (HG) is a D-glyceraldehyde 3-phosphate binding site. Gln-303 contacts NAD(+).

This sequence belongs to the glyceraldehyde-3-phosphate dehydrogenase family. In terms of assembly, homotetramer.

It localises to the cytoplasm. The catalysed reaction is D-glyceraldehyde 3-phosphate + phosphate + NADP(+) = (2R)-3-phospho-glyceroyl phosphate + NADPH + H(+). The enzyme catalyses D-glyceraldehyde 3-phosphate + phosphate + NAD(+) = (2R)-3-phospho-glyceroyl phosphate + NADH + H(+). The protein operates within carbohydrate degradation; glycolysis; pyruvate from D-glyceraldehyde 3-phosphate: step 1/5. In Methanococcus vannielii (strain ATCC 35089 / DSM 1224 / JCM 13029 / OCM 148 / SB), this protein is Glyceraldehyde-3-phosphate dehydrogenase.